The following is a 745-amino-acid chain: AMP deaminase 1 (745 aa).

Residue Thr79 is modified to Phosphothreonine. Phosphoserine is present on Ser83. Tyr214 is subject to Phosphotyrosine. Residues His301 and His303 each contribute to the Zn(2+) site. Substrate-binding positions include His303 and 372–377 (KFNDKY). Ser439 bears the Phosphoserine mark. Residue His570 coordinates Zn(2+). Residue Glu573 participates in substrate binding. His592 acts as the Proton acceptor in catalysis. Asp647 is a binding site for Zn(2+). Residue 648–651 (DPMQ) participates in substrate binding.

The protein belongs to the metallo-dependent hydrolases superfamily. Adenosine and AMP deaminases family. As to quaternary structure, homotetramer. The cofactor is Zn(2+).

It carries out the reaction AMP + H2O + H(+) = IMP + NH4(+). It functions in the pathway purine metabolism; IMP biosynthesis via salvage pathway; IMP from AMP: step 1/1. AMP deaminase plays a critical role in energy metabolism. In Mus musculus (Mouse), this protein is AMP deaminase 1.